The following is a 150-amino-acid chain: Large ribosomal subunit protein bL9 (150 aa).

It belongs to the bacterial ribosomal protein bL9 family.

Binds to the 23S rRNA. The protein is Large ribosomal subunit protein bL9 of Paracidovorax citrulli (strain AAC00-1) (Acidovorax citrulli).